We begin with the raw amino-acid sequence, 429 residues long: MAAIVIVGAQWGDEGKGKATDILGGLVDYVVKPNGGNNAGHTVVVGGEKYELKLLPAGVLSETATPILGNGVVINLEALFEEIDGLEARGADASRLRISANAHLVAPYHQIMDRVQERFLGKRAIGTTGRGIGPTYQDKVGRVGIRVQDIFDESILRQKIESALDVKNQVLVKMYNRKAIVAEETVQYFLSYADRLRPMVIDATLELNKALDEGKHVLMEGGQATMLDVDHGTYPFVTSSNPTAGGACVGSGVGPTRITSTLGIIKAYTTRVGAGPFPTELFDKWGEYLQTVGGEVGVNTGRKRRCGWYDSVIARYASRVNGFTDYFLTKLDVLTGIGEIPICVAYEVDGVRHDEMPMTQSDFHHAKPIFETMPAWDEDITGCRTFEELPQKAQDYVRRLEELSGARFSYIGVGPGRDQTIVLHDVMES.

Residues 12-18 (GDEGKGK) and 40-42 (GHT) contribute to the GTP site. Residue D13 is the Proton acceptor of the active site. The Mg(2+) site is built by D13 and G40. Residues 13-16 (DEGK), 38-41 (NAGH), T128, R142, Q223, T238, and R302 contribute to the IMP site. The active-site Proton donor is H41. 298-304 (VNTGRKR) serves as a coordination point for substrate. GTP contacts are provided by residues R304, 330-332 (KLD), and 412-414 (GVG).

The protein belongs to the adenylosuccinate synthetase family. Homodimer. It depends on Mg(2+) as a cofactor.

The protein resides in the cytoplasm. It carries out the reaction IMP + L-aspartate + GTP = N(6)-(1,2-dicarboxyethyl)-AMP + GDP + phosphate + 2 H(+). Its pathway is purine metabolism; AMP biosynthesis via de novo pathway; AMP from IMP: step 1/2. Functionally, plays an important role in the de novo pathway of purine nucleotide biosynthesis. Catalyzes the first committed step in the biosynthesis of AMP from IMP. The chain is Adenylosuccinate synthetase from Corynebacterium efficiens (strain DSM 44549 / YS-314 / AJ 12310 / JCM 11189 / NBRC 100395).